Reading from the N-terminus, the 51-residue chain is SPbeta prophage-derived uncharacterized protein YorQ (51 aa).

This is SPbeta prophage-derived uncharacterized protein YorQ (yorQ) from Bacillus subtilis (strain 168).